The chain runs to 100 residues: Defensin-like protein 316 (100 aa).

A signal peptide spans 1-18 (MASHIICYIFCIIKLSCA). Intrachain disulfides connect cysteine 21/cysteine 84, cysteine 43/cysteine 64, and cysteine 53/cysteine 76.

This sequence belongs to the DEFL family.

It localises to the secreted. The polypeptide is Defensin-like protein 316 (Arabidopsis thaliana (Mouse-ear cress)).